The sequence spans 355 residues: Peptide chain release factor 1 (355 aa).

Gln233 carries the post-translational modification N5-methylglutamine.

Belongs to the prokaryotic/mitochondrial release factor family. In terms of processing, methylated by PrmC. Methylation increases the termination efficiency of RF1.

The protein localises to the cytoplasm. In terms of biological role, peptide chain release factor 1 directs the termination of translation in response to the peptide chain termination codons UAG and UAA. The chain is Peptide chain release factor 1 from Desulfitobacterium hafniense (strain DSM 10664 / DCB-2).